Reading from the N-terminus, the 194-residue chain is MQQIQISDAAQGHFRKLLDQQEEGTNIRIFVVNPGTPNAECGVSYCPPNAVEATDTEMKYATFSAFVDEVSLPFLEDAEIDYVTEELGTQLTLKAPNAKMRKVADDAPLIERVDYVIQTQINPQLASHGGRITLVEITDEGYAILQFGGGCNGCSMVDVTLKDGVEKQLVELFAGELKGAKDITEHQRGEHSYY.

Positions 151 and 154 each coordinate [4Fe-4S] cluster.

This sequence belongs to the NfuA family. In terms of assembly, homodimer. [4Fe-4S] cluster serves as cofactor.

Functionally, involved in iron-sulfur cluster biogenesis. Binds a 4Fe-4S cluster, can transfer this cluster to apoproteins, and thereby intervenes in the maturation of Fe/S proteins. Could also act as a scaffold/chaperone for damaged Fe/S proteins. In Mannheimia succiniciproducens (strain KCTC 0769BP / MBEL55E), this protein is Fe/S biogenesis protein NfuA.